The primary structure comprises 152 residues: Large ribosomal subunit protein bL9 (152 aa).

It belongs to the bacterial ribosomal protein bL9 family.

In terms of biological role, binds to the 23S rRNA. This chain is Large ribosomal subunit protein bL9, found in Prochlorococcus marinus (strain NATL1A).